The following is a 192-amino-acid chain: uncharacterized protein (192 aa).

The Nudix hydrolase domain maps to H29 to S160. A Nudix box motif is present at residues G67–A89. E83 and E87 together coordinate Mg(2+).

Belongs to the Nudix hydrolase family. PCD1 subfamily. The cofactor is Mn(2+). Requires Mg(2+) as cofactor.

In terms of biological role, probably mediates the hydrolysis of some nucleoside diphosphate derivatives. This is an uncharacterized protein from Escherichia fergusonii (strain ATCC 35469 / DSM 13698 / CCUG 18766 / IAM 14443 / JCM 21226 / LMG 7866 / NBRC 102419 / NCTC 12128 / CDC 0568-73).